We begin with the raw amino-acid sequence, 1201 residues long: Potassium/sodium hyperpolarization-activated cyclic nucleotide-gated channel 4 (1201 aa).

Residues 1–263 (MDKLPPSMRK…IIHPYSDFRF (263 aa)) lie on the Cytoplasmic side of the membrane. The interval 24-183 (WIMDEEEDGE…PASASCEQPS (160 aa)) is disordered. Acidic residues predominate over residues 26-36 (MDEEEDGEEEG). The span at 105–118 (SRGGGSGGAGGGSS) shows a compositional bias: gly residues. Residues 121 to 132 (HLHDSAEERRLI) show a composition bias toward basic and acidic residues. Residue serine 139 is modified to Phosphoserine. A compositionally biased stretch (pro residues) spans 164-174 (ASPPPQQPPQP). An involved in subunit assembly region spans residues 209-260 (GQSGFMQRQFGAMLQPGVNKFSLRMFGSQKAVEREQERVKSAGFWIIHPYSD). Residues 264-286 (YWDLTMLLLMVGNLIIIPVGITF) traverse the membrane as a helical segment. The Extracellular segment spans residues 287–293 (FKDENTT). A helical transmembrane segment spans residues 294 to 314 (PWIVFNVVSDTFFLIDLVLNF). The Cytoplasmic portion of the chain corresponds to 315–336 (RTGIVVEDNTEIILDPQRIKMK). A helical membrane pass occupies residues 337–359 (YLKSWFVVDFISSIPVDYIFLIV). Residues 360-378 (ETRIDSEVYKTARALRIVR) are Extracellular-facing. The helical; Voltage-sensor transmembrane segment at 379–399 (FTKILSLLRLLRLSRLIRYIH) threads the bilayer. The Cytoplasmic segment spans residues 400 to 413 (QWEEIFHMTYDLAS). A helical membrane pass occupies residues 414-436 (AVVRIVNLIGMMLLLCHWDGCLQ). Residues 437–464 (FLVPMLQDFPHDCWVSINGMVNNSWGKQ) lie on the Extracellular side of the membrane. N-linked (GlcNAc...) asparagine glycosylation occurs at asparagine 458. Positions 465–486 (YSYALFKAMSHMLCIGYGRQAP) form an intramembrane region, pore-forming. Over 487–491 (VGMSD) the chain is Extracellular. Residues 492–517 (VWLTMLSMIVGATCYAMFIGHATALI) traverse the membrane as a helical segment. Topologically, residues 518–1201 (QSLDSSRRQY…PVRSKLPSNL (684 aa)) are cytoplasmic. Tyrosine 559, lysine 562, phenylalanine 564, and glutamate 566 together coordinate 3',5'-cyclic GMP. Residues glycine 659, glutamate 660, cysteine 662, arginine 669, threonine 670, valine 673, and arginine 710 each contribute to the 3',5'-cyclic AMP site. Disordered regions lie at residues 804 to 902 (AIFR…TAAA) and 914 to 1201 (ALGG…PSNL). 2 stretches are compositionally biased toward low complexity: residues 831–856 (SLIPSALGSASPASSPSQVDTPSSSS) and 866–880 (SAPPGLSPLLPSSSS). Residues 881 to 894 (SPPPGACGSPPAPT) show a composition bias toward pro residues. Low complexity-rich tracts occupy residues 915–939 (LGGSLSSSDSPLLTPLQPGARSPQA) and 967–995 (RSPSSSPGQLGQPPGELSLGLAAGPSSTP). Pro residues predominate over residues 1029 to 1042 (GHSPGPPRTFPSAP). A compositionally biased stretch (low complexity) spans 1045 to 1056 (ASGSHGSLLLPP). Phosphoserine occurs at positions 1105 and 1108. Over residues 1122-1134 (AGGGSGSSGGLGP) the composition is skewed to gly residues.

Belongs to the potassium channel HCN family. In terms of assembly, homotetramer. The potassium channel is composed of a homo- or heterotetrameric complex of pore-forming subunits. Interacts with PEX5L with a 4:4 HCN4:PEX5L stoichiometry; reduces the effects of cAMP on the voltage-dependence and rate of activation. Interacts with IRAG1; regulates HCN4 channel activity. Interacts with IRAG2; regulates HCN4 channel activity. S-palmitoylated. In terms of tissue distribution, detected in a subset of elongated cells in taste buds.

It is found in the cell membrane. It carries out the reaction K(+)(in) = K(+)(out). The enzyme catalyses Na(+)(in) = Na(+)(out). With respect to regulation, activated by cAMP, and to a lesser extent by cGMP and cCMP. cAMP binding causes a conformation change that leads to the assembly of an active tetramer and channel opening. Binding of cAMP removes a tonic inhibition conferred by cyclic nucleotide-binding domain (CNBD) on channel opening. Cyclic dinucleotides can modulate HCN4 channel; cyclic dinucleotides acting as potent antagonists of cAMP. Inhibited by extracellular Cs(+) ions. Auxiliary subunits can also regulate HCN4 channel. IRAG1 causes a gain-of-function by shifting HCN4 activation to more depolarized membrane potentials in the absence of cAMP. In contrast, IRAG2 causes a loss-of-function by inhibiting cAMP-dependent potentiation of HCN4 activation. In terms of biological role, hyperpolarization-activated ion channel that are permeable to Na(+) and K(+) ions with very slow activation and inactivation. Exhibits higher selectivity for K(+) over Na(+) ions. Contributes to the native pacemaker currents in heart (If) that regulate the rhythm of heart beat. Contributes to the native pacemaker currents in neurons (Ih). May mediate responses to sour stimuli. This is Potassium/sodium hyperpolarization-activated cyclic nucleotide-gated channel 4 (Hcn4) from Mus musculus (Mouse).